The sequence spans 211 residues: Peptide methionine sulfoxide reductase MsrA (211 aa).

Residue Cys60 is part of the active site.

The protein belongs to the MsrA Met sulfoxide reductase family.

The enzyme catalyses L-methionyl-[protein] + [thioredoxin]-disulfide + H2O = L-methionyl-(S)-S-oxide-[protein] + [thioredoxin]-dithiol. It carries out the reaction [thioredoxin]-disulfide + L-methionine + H2O = L-methionine (S)-S-oxide + [thioredoxin]-dithiol. Has an important function as a repair enzyme for proteins that have been inactivated by oxidation. Catalyzes the reversible oxidation-reduction of methionine sulfoxide in proteins to methionine. This chain is Peptide methionine sulfoxide reductase MsrA, found in Methanosarcina mazei (strain ATCC BAA-159 / DSM 3647 / Goe1 / Go1 / JCM 11833 / OCM 88) (Methanosarcina frisia).